Consider the following 417-residue polypeptide: Protein-lysine 6-oxidase (417 aa).

Positions 1-21 (MRFAWTVLLLGPLQLCALVHC) are cleaved as a signal peptide. The propeptide at 22 to 168 (APPAAGQQQP…PPSRVDGMVG (147 aa)) is removed by BMP1. Positions 64–89 (YQPQRRRDPGAAVPGAANASAQQPRT) are disordered. The span at 73–84 (GAAVPGAANASA) shows a compositional bias: low complexity. Residues N81, N97, and N144 are each glycosylated (N-linked (GlcNAc...) asparagine). Residues 137–174 (AGASRAENQTAPGEVPALSNLRPPSRVDGMVGDDPYNP) form a disordered region. Y187 carries the post-translational modification Sulfotyrosine. A lysyl-oxidase like region spans residues 213–417 (PDLVADPYYI…YASGCTISPY (205 aa)). Cystine bridges form between C238–C244, C291–C340, C324–C330, C351–C361, and C398–C412. The Cu cation site is built by H292, H294, and H296. The segment at residues 320–355 (KASFCLEDTSCDYGYHRRFACTAHTQGLSPGCYDTY) is a cross-link (lysine tyrosylquinone (Lys-Tyr)). At Y355 the chain carries 2',4',5'-topaquinone.

This sequence belongs to the lysyl oxidase family. As to quaternary structure, interacts with MFAP4. Interacts (via propeptide) with EFEMP2; this interaction is strong and facilitates formation of ternary complexes with ELN during elastic fiber assembly; this interaction limits interaction of EFEMP2 with FBLN5. Requires Cu cation as cofactor. Lysine tyrosylquinone residue serves as cofactor. The lysine tyrosylquinone cross-link (LTQ) is generated by condensation of the epsilon-amino group of a lysine with a topaquinone produced by oxidation of tyrosine. In terms of processing, proteolytically cleaved by BMP1 which removes the propeptide. Also proteolytically cleaved by ADAMTS2 and ADAMTS14, but not by ADAMTS3, at an additional cleavage site downstream of the BMP1 cleavage site. The propeptide plays a role in directing the deposition of this enzyme to elastic fibers, via interaction with tropoelastin. Cleavage by BMP1 to remove the propeptide does not increase enzymatic activity but increases binding to collagen. Cleavage by ADAMTS2 produces a form with reduced collagen-binding activity. Post-translationally, sulfated at Tyr-187 and also at either Tyr-183 or Tyr-184 which enhances binding to collagen. As to expression, heart, placenta, skeletal muscle, kidney, lung and pancreas.

It localises to the secreted. Its subcellular location is the extracellular space. It catalyses the reaction L-lysyl-[protein] + O2 + H2O = (S)-2-amino-6-oxohexanoyl-[protein] + H2O2 + NH4(+). Its function is as follows. Responsible for the post-translational oxidative deamination of peptidyl lysine residues in precursors to fibrous collagen and elastin. Regulator of Ras expression. May play a role in tumor suppression. Plays a role in the aortic wall architecture. In Homo sapiens (Human), this protein is Protein-lysine 6-oxidase (LOX).